A 429-amino-acid polypeptide reads, in one-letter code: Adenylosuccinate synthetase (429 aa).

GTP is bound by residues 12 to 18 (GDEGKGK) and 40 to 42 (GHT). D13 acts as the Proton acceptor in catalysis. D13 and G40 together coordinate Mg(2+). IMP contacts are provided by residues 13-16 (DEGK), 38-41 (NAGH), T128, R142, Q223, and R302. The Proton donor role is filled by H41. A substrate-binding site is contributed by 298 to 304 (TVTGRPR). GTP-binding positions include R304, 330–332 (LLD), and 412–414 (SVG).

It belongs to the adenylosuccinate synthetase family. Homodimer. The cofactor is Mg(2+).

The protein resides in the cytoplasm. It carries out the reaction IMP + L-aspartate + GTP = N(6)-(1,2-dicarboxyethyl)-AMP + GDP + phosphate + 2 H(+). It participates in purine metabolism; AMP biosynthesis via de novo pathway; AMP from IMP: step 1/2. Its function is as follows. Plays an important role in the de novo pathway of purine nucleotide biosynthesis. Catalyzes the first committed step in the biosynthesis of AMP from IMP. This is Adenylosuccinate synthetase from Lactobacillus delbrueckii subsp. bulgaricus (strain ATCC 11842 / DSM 20081 / BCRC 10696 / JCM 1002 / NBRC 13953 / NCIMB 11778 / NCTC 12712 / WDCM 00102 / Lb 14).